Consider the following 208-residue polypeptide: Small ribosomal subunit protein uS4 (208 aa).

Residues 98-160 (RRLDNVVYRM…SKNNVQIQRA (63 aa)) enclose the S4 RNA-binding domain.

This sequence belongs to the universal ribosomal protein uS4 family. As to quaternary structure, part of the 30S ribosomal subunit. Contacts protein S5. The interaction surface between S4 and S5 is involved in control of translational fidelity.

One of the primary rRNA binding proteins, it binds directly to 16S rRNA where it nucleates assembly of the body of the 30S subunit. In terms of biological role, with S5 and S12 plays an important role in translational accuracy. The sequence is that of Small ribosomal subunit protein uS4 from Nautilia profundicola (strain ATCC BAA-1463 / DSM 18972 / AmH).